Consider the following 507-residue polypeptide: ATP synthase subunit alpha, chloroplastic (507 aa).

An ATP-binding site is contributed by 170–177; it reads GDRQTGKT.

It belongs to the ATPase alpha/beta chains family. In terms of assembly, F-type ATPases have 2 components, CF(1) - the catalytic core - and CF(0) - the membrane proton channel. CF(1) has five subunits: alpha(3), beta(3), gamma(1), delta(1), epsilon(1). CF(0) has four main subunits: a, b, b' and c.

The protein localises to the plastid. It localises to the chloroplast thylakoid membrane. It carries out the reaction ATP + H2O + 4 H(+)(in) = ADP + phosphate + 5 H(+)(out). Its function is as follows. Produces ATP from ADP in the presence of a proton gradient across the membrane. The alpha chain is a regulatory subunit. This Acorus calamus var. americanus (American sweet flag) protein is ATP synthase subunit alpha, chloroplastic.